Here is a 266-residue protein sequence, read N- to C-terminus: Pyrrolizixenacetamide deacetylase (266 aa).

Thr28 is an acetate binding site. Ser94 serves as the catalytic Nucleophile. Leu95 contributes to the acetate binding site. Residues Asp215 and His242 each act as charge relay system in the active site. His242 contacts acetate.

This sequence belongs to the AB hydrolase superfamily. As to quaternary structure, homodimer.

It catalyses the reaction pyrrolizixenacetamide + H2O = 3-amino-5,6,7,7a-tetrahydro-1H-pyrrolizin-1-one + acetate + H(+). Its function is as follows. Involved in the biosynthetic pathway of pyrrolizwilline, a pyrrolizidine alkaloid. Catalyzes the N-deacetylation of pyrrolizixenacetamide. In Xenorhabdus hominickii, this protein is Pyrrolizixenacetamide deacetylase.